We begin with the raw amino-acid sequence, 463 residues long: Fumarate hydratase class II (463 aa).

Residues 95 to 97 (SGT), 126 to 129 (HPND), 136 to 138 (SSN), and T184 contribute to the substrate site. The active-site Proton donor/acceptor is the H185. S315 is a catalytic residue. Residues S316 and 321–323 (KIN) contribute to the substrate site.

This sequence belongs to the class-II fumarase/aspartase family. Fumarase subfamily. As to quaternary structure, homotetramer.

It localises to the cytoplasm. It carries out the reaction (S)-malate = fumarate + H2O. Its pathway is carbohydrate metabolism; tricarboxylic acid cycle; (S)-malate from fumarate: step 1/1. Functionally, involved in the TCA cycle. Catalyzes the stereospecific interconversion of fumarate to L-malate. This Chlamydia muridarum (strain MoPn / Nigg) protein is Fumarate hydratase class II.